The sequence spans 419 residues: GTPase Obg (419 aa).

An Obg domain is found at 1 to 156; that stretch reads MRFVDYVSIE…FYLDLQLKVM (156 aa). Residues 157 to 334 form the OBG-type G domain; the sequence is ADIGLVGKPN…LEEKQKKLEI (178 aa). GTP contacts are provided by residues 163–170, 188–192, 209–212, 278–281, and 315–317; these read GKPNAGKS, FTTLV, DLPG, NKCD, and NII. S170 and T190 together coordinate Mg(2+). Residues 342-419 enclose the OCT domain; it reads IEFNLKAPFL…RIYEFEFHWN (78 aa).

The protein belongs to the TRAFAC class OBG-HflX-like GTPase superfamily. OBG GTPase family. Monomer. It depends on Mg(2+) as a cofactor.

It is found in the cytoplasm. Its function is as follows. An essential GTPase which binds GTP, GDP and possibly (p)ppGpp with moderate affinity, with high nucleotide exchange rates and a fairly low GTP hydrolysis rate. Plays a role in control of the cell cycle, stress response, ribosome biogenesis and in those bacteria that undergo differentiation, in morphogenesis control. The protein is GTPase Obg of Mesomycoplasma hyopneumoniae (strain 232) (Mycoplasma hyopneumoniae).